The primary structure comprises 469 residues: Glutamate--tRNA ligase (469 aa).

The short motif at 11 to 21 (PSPTGFIHLGN) is the 'HIGH' region element. The span at 116 to 131 (ASGEKPRYDGTWRPEP) shows a compositional bias: basic and acidic residues. The interval 116 to 139 (ASGEKPRYDGTWRPEPGKVLPTPP) is disordered. The 'KMSKS' region signature appears at 243-247 (KMSKR). Lys-246 lines the ATP pocket.

This sequence belongs to the class-I aminoacyl-tRNA synthetase family. Glutamate--tRNA ligase type 1 subfamily. As to quaternary structure, monomer.

It localises to the cytoplasm. The catalysed reaction is tRNA(Glu) + L-glutamate + ATP = L-glutamyl-tRNA(Glu) + AMP + diphosphate. Catalyzes the attachment of glutamate to tRNA(Glu) in a two-step reaction: glutamate is first activated by ATP to form Glu-AMP and then transferred to the acceptor end of tRNA(Glu). This Paraburkholderia phymatum (strain DSM 17167 / CIP 108236 / LMG 21445 / STM815) (Burkholderia phymatum) protein is Glutamate--tRNA ligase.